The sequence spans 341 residues: Cysteine-rich repeat secretory protein 1 (341 aa).

The first 25 residues, 1-25, serve as a signal peptide directing secretion; sequence MFSLPLHQSKLIFLLSFLLIKTLNA. Gnk2-homologous domains are found at residues 28–131 and 136–245; these read TYLL…SRKI and DQGP…ATFL. 4 disulfides stabilise this stretch: cysteine 85–cysteine 94, cysteine 97–cysteine 122, cysteine 199–cysteine 208, and cysteine 211–cysteine 236. A compositionally biased stretch (pro residues) spans 247–262; sequence PPPPPPPPPPPPPPPQ. The tract at residues 247 to 274 is disordered; it reads PPPPPPPPPPPPPPPQRLYGENDTPSSD.

The protein belongs to the cysteine-rich repeat secretory protein family.

The protein resides in the secreted. The protein is Cysteine-rich repeat secretory protein 1 (CRRSP1) of Arabidopsis thaliana (Mouse-ear cress).